The following is a 360-amino-acid chain: Photosystem II protein D1 (360 aa).

Helical transmembrane passes span 30–47 (YVGW…TAAA), 119–134 (HFLI…QWEL), and 143–157 (WICV…AAFA). His119 contributes to the chlorophyll a binding site. Tyr127 is a pheophytin a binding site. [CaMn4O5] cluster contacts are provided by Asp171 and Glu190. The chain crosses the membrane as a helical span at residues 198–219 (FHMAGVAGMFGGSLFSAMHGSL). His199 contributes to the chlorophyll a binding site. A quinone contacts are provided by residues His216 and 265 to 266 (SF). Residue His216 participates in Fe cation binding. Fe cation is bound at residue His273. The helical transmembrane segment at 275-289 (FLAVFPVVCVWLTSM) threads the bilayer. [CaMn4O5] cluster is bound by residues His333, Glu334, Asp343, and Ala345. Residues 346–360 (AAESTTVALSAPAIG) constitute a propeptide that is removed on maturation.

Belongs to the reaction center PufL/M/PsbA/D family. In terms of assembly, PSII is composed of 1 copy each of membrane proteins PsbA, PsbB, PsbC, PsbD, PsbE, PsbF, PsbH, PsbI, PsbJ, PsbK, PsbL, PsbM, PsbT, PsbX, PsbY, Psb30/Ycf12, peripheral proteins PsbO, CyanoQ (PsbQ), PsbU, PsbV and a large number of cofactors. It forms dimeric complexes. The D1/D2 heterodimer binds P680, chlorophylls that are the primary electron donor of PSII, and subsequent electron acceptors. It shares a non-heme iron and each subunit binds pheophytin, quinone, additional chlorophylls, carotenoids and lipids. D1 provides most of the ligands for the Mn4-Ca-O5 cluster of the oxygen-evolving complex (OEC). There is also a Cl(-1) ion associated with D1 and D2, which is required for oxygen evolution. The PSII complex binds additional chlorophylls, carotenoids and specific lipids. is required as a cofactor. In terms of processing, tyr-162 forms a radical intermediate that is referred to as redox-active TyrZ, YZ or Y-Z. C-terminally processed by CtpA; processing is essential to allow assembly of the oxygen-evolving complex and thus photosynthetic growth.

The protein resides in the cellular thylakoid membrane. It catalyses the reaction 2 a plastoquinone + 4 hnu + 2 H2O = 2 a plastoquinol + O2. Its function is as follows. Photosystem II (PSII) is a light-driven water:plastoquinone oxidoreductase that uses light energy to abstract electrons from H(2)O, generating O(2) and a proton gradient subsequently used for ATP formation. It consists of a core antenna complex that captures photons, and an electron transfer chain that converts photonic excitation into a charge separation. The D1/D2 (PsbA/PsbD) reaction center heterodimer binds P680, the primary electron donor of PSII as well as several subsequent electron acceptors. This Prochlorococcus marinus (strain MIT 9301) protein is Photosystem II protein D1.